Consider the following 193-residue polypeptide: p53 apoptosis effector related to PMP-22 (193 aa).

A run of 4 helical transmembrane segments spans residues 12 to 32 (RWIL…ALAG), 79 to 99 (AMLF…FFAL), 110 to 130 (VIGG…VIYP), and 151 to 171 (WAYG…FFFC).

Belongs to the TMEM47 family. As to quaternary structure, (Microbial infection) Interacts with S.typhimurium sipA and sctB1/sipC. Expressed in skin, heart, placental, liver, pancreas, keratinocytes and dermal fibroblasts. May translocate to the intestinal apical epithelial cell surface via sipA and sctB1/sipC-promoted exocytic translocation following infection by S. Typhimurium.

It localises to the cell junction. The protein resides in the desmosome. Its subcellular location is the cell membrane. The protein localises to the cytoplasm. Component of intercellular desmosome junctions. Plays a role in stratified epithelial integrity and cell-cell adhesion by promoting desmosome assembly. Thereby plays a role in barrier function of the skin against infection. Plays a role in mammary epithelial tissue homeostasis and remodeling during and after pregnancy, potentially via its involvement in desmosome cell-cell junctions. Required for tooth enamel development via facilitating desmosome-mediated ameloblast adhesion to the stratum intermedium during the transitional stage of amelogenesis. May also play a role in downstream transcriptional regulation of other genes involved in amelogenesis such as AMBN, ENAM, MMP20 and KLK4. Plays a role as an effector in the TP53-dependent apoptotic pathway. Positively regulates apoptosis in T-helper 17 (Th17) cell populations via caspase-dependent signaling. Promotes neutrophil transepithelial migration in response to chemoattractants such as hepoxilin A3 (HXA3), N-Formylmethionyl-leucyl-phenylalanine (fMLP) and CXCL8/IL-8. Required for neutrophil transepithelial migration in response to S.typhimurium infection. May act as a positive regulator of endothelial cell apoptosis in response to blood flow-derived shear stress. This chain is p53 apoptosis effector related to PMP-22, found in Homo sapiens (Human).